A 66-amino-acid polypeptide reads, in one-letter code: MKAGIHPEFKKATVKCACGNEFETGSVKEEVRVEICSECHPFYTGRQKFASADGRVDRFNKKYGLK.

C16, C18, C36, and C39 together coordinate Zn(2+).

The protein belongs to the bacterial ribosomal protein bL31 family. Type A subfamily. Part of the 50S ribosomal subunit. Zn(2+) serves as cofactor.

Its function is as follows. Binds the 23S rRNA. This is Large ribosomal subunit protein bL31 from Bacillus licheniformis (strain ATCC 14580 / DSM 13 / JCM 2505 / CCUG 7422 / NBRC 12200 / NCIMB 9375 / NCTC 10341 / NRRL NRS-1264 / Gibson 46).